A 143-amino-acid chain; its full sequence is Large ribosomal subunit protein uL11 (143 aa).

The protein belongs to the universal ribosomal protein uL11 family. As to quaternary structure, part of the ribosomal stalk of the 50S ribosomal subunit. Interacts with L10 and the large rRNA to form the base of the stalk. L10 forms an elongated spine to which L12 dimers bind in a sequential fashion forming a multimeric L10(L12)X complex. In terms of processing, one or more lysine residues are methylated.

In terms of biological role, forms part of the ribosomal stalk which helps the ribosome interact with GTP-bound translation factors. The chain is Large ribosomal subunit protein uL11 from Laribacter hongkongensis (strain HLHK9).